A 451-amino-acid polypeptide reads, in one-letter code: Arginine biosynthesis bifunctional protein ArgJ, mitochondrial (451 aa).

Substrate contacts are provided by threonine 180, lysine 209, threonine 220, glutamate 307, asparagine 446, and threonine 451. Threonine 220 serves as the catalytic Nucleophile.

This sequence belongs to the ArgJ family. In terms of assembly, heterodimer of an alpha and a beta chain. Post-translationally, the alpha and beta chains are autoproteolytically processed from a single precursor protein within the mitochondrion.

The protein resides in the mitochondrion matrix. It catalyses the reaction N(2)-acetyl-L-ornithine + L-glutamate = N-acetyl-L-glutamate + L-ornithine. The catalysed reaction is L-glutamate + acetyl-CoA = N-acetyl-L-glutamate + CoA + H(+). It functions in the pathway amino-acid biosynthesis; L-arginine biosynthesis; L-ornithine and N-acetyl-L-glutamate from L-glutamate and N(2)-acetyl-L-ornithine (cyclic): step 1/1. Its pathway is amino-acid biosynthesis; L-arginine biosynthesis; N(2)-acetyl-L-ornithine from L-glutamate: step 1/4. Catalyzes two activities which are involved in the cyclic version of arginine biosynthesis: the synthesis of acetylglutamate from glutamate and acetyl-CoA, and of ornithine by transacetylation between acetylornithine and glutamate. The protein is Arginine biosynthesis bifunctional protein ArgJ, mitochondrial of Fusarium vanettenii (strain ATCC MYA-4622 / CBS 123669 / FGSC 9596 / NRRL 45880 / 77-13-4) (Fusarium solani subsp. pisi).